Consider the following 598-residue polypeptide: Pantothenate kinase 1 (598 aa).

Residues 32–161 (ARPGDQGKAG…SPGAPVGTSA (130 aa)) form a disordered region. Positions 38 to 49 (GKAGGGSPGWGC) are enriched in gly residues. At Ser-215 the chain carries Phosphoserine. The Nucleolar localization signal signature appears at 218 to 235 (KKCRLRRRMDSGRKNRPP). The Proton acceptor role is filled by Glu-363. 3 residues coordinate acetyl-CoA: Ser-417, Ser-420, and Arg-432.

This sequence belongs to the type II pantothenate kinase family. As to quaternary structure, homodimer. As to expression, expressed at high levels in brain, heart, kidney, liver, skeletal muscle and testis. In terms of tissue distribution, detected at much lower levels in kidney, liver, brain and testis and not detected in heart or skeletal muscle.

Its subcellular location is the cytoplasm. It localises to the nucleus. The protein resides in the nucleolus. The protein localises to the cytosol. It is found in the cytoplasmic vesicle. Its subcellular location is the clathrin-coated vesicle. It localises to the recycling endosome. It carries out the reaction (R)-pantothenate + ATP = (R)-4'-phosphopantothenate + ADP + H(+). Its pathway is cofactor biosynthesis; coenzyme A biosynthesis; CoA from (R)-pantothenate: step 1/5. With respect to regulation, regulated by feedback inhibition by CoA and its thioesters. In terms of biological role, catalyzes the phosphorylation of pantothenate to generate 4'-phosphopantothenate in the first and rate-determining step of coenzyme A (CoA) synthesis. This chain is Pantothenate kinase 1 (PANK1), found in Homo sapiens (Human).